We begin with the raw amino-acid sequence, 138 residues long: Small ribosomal subunit protein bS6 (138 aa).

Residues 97-121 (TEQSEMLKAEENRSERRERRDRPDN) are compositionally biased toward basic and acidic residues. The tract at residues 97-138 (TEQSEMLKAEENRSERRERRDRPDNTDGSNENDSDSDNNADE) is disordered. Positions 126-138 (NENDSDSDNNADE) are enriched in acidic residues.

The protein belongs to the bacterial ribosomal protein bS6 family.

In terms of biological role, binds together with bS18 to 16S ribosomal RNA. This Stutzerimonas stutzeri (strain A1501) (Pseudomonas stutzeri) protein is Small ribosomal subunit protein bS6.